Consider the following 387-residue polypeptide: Anhydro-N-acetylmuramic acid kinase (387 aa).

17–24 (GTSMDGVD) is an ATP binding site.

This sequence belongs to the anhydro-N-acetylmuramic acid kinase family.

It carries out the reaction 1,6-anhydro-N-acetyl-beta-muramate + ATP + H2O = N-acetyl-D-muramate 6-phosphate + ADP + H(+). It participates in amino-sugar metabolism; 1,6-anhydro-N-acetylmuramate degradation. Its pathway is cell wall biogenesis; peptidoglycan recycling. Catalyzes the specific phosphorylation of 1,6-anhydro-N-acetylmuramic acid (anhMurNAc) with the simultaneous cleavage of the 1,6-anhydro ring, generating MurNAc-6-P. Is required for the utilization of anhMurNAc either imported from the medium or derived from its own cell wall murein, and thus plays a role in cell wall recycling. This is Anhydro-N-acetylmuramic acid kinase from Burkholderia pseudomallei (strain 1710b).